The following is a 135-amino-acid chain: Cytochrome c oxidase subunit 2 (135 aa).

Positions 81, 116, 120, and 124 each coordinate Cu cation.

Belongs to the cytochrome c oxidase subunit 2 family.

It localises to the cell membrane. It catalyses the reaction 4 Fe(II)-[cytochrome c] + O2 + 8 H(+)(in) = 4 Fe(III)-[cytochrome c] + 2 H2O + 4 H(+)(out). Functionally, subunits I and II form the functional core of the enzyme complex. Electrons originating in cytochrome c are transferred via heme a and Cu(A) to the binuclear center formed by heme a3 and Cu(B). The polypeptide is Cytochrome c oxidase subunit 2 (cbaB) (Thermus thermophilus).